The following is a 119-amino-acid chain: Large ribosomal subunit protein uL14 (119 aa).

This sequence belongs to the universal ribosomal protein uL14 family. In terms of assembly, part of the 50S ribosomal subunit. Forms a cluster with proteins L3 and L19. In the 70S ribosome, L14 and L19 interact and together make contacts with the 16S rRNA in bridges B5 and B8.

Its function is as follows. Binds to 23S rRNA. Forms part of two intersubunit bridges in the 70S ribosome. In Anaplasma marginale (strain St. Maries), this protein is Large ribosomal subunit protein uL14.